Consider the following 819-residue polypeptide: Outer membrane usher protein CssD (819 aa).

The protein belongs to the fimbrial export usher family.

It is found in the cell outer membrane. Involved in the export and assembly of C6 fimbrial subunits across the outer membrane. The sequence is that of Outer membrane usher protein CssD (cssD) from Escherichia coli.